We begin with the raw amino-acid sequence, 529 residues long: Lysine--tRNA ligase (529 aa).

The 'HIGH' region motif lies at 44–52; it reads PSGLPHIGT. Residues 290–294 carry the 'KMSKS' region motif; the sequence is KISKS. An ATP-binding site is contributed by Lys293.

It belongs to the class-I aminoacyl-tRNA synthetase family.

The protein resides in the cytoplasm. The catalysed reaction is tRNA(Lys) + L-lysine + ATP = L-lysyl-tRNA(Lys) + AMP + diphosphate. This chain is Lysine--tRNA ligase, found in Rickettsia akari (strain Hartford).